A 140-amino-acid polypeptide reads, in one-letter code: Nucleoside diphosphate kinase (140 aa).

Positions 11, 59, 87, 93, 104, and 114 each coordinate ATP. His-117 (pros-phosphohistidine intermediate) is an active-site residue.

This sequence belongs to the NDK family. Homotetramer. Mg(2+) is required as a cofactor.

The protein resides in the cytoplasm. It catalyses the reaction a 2'-deoxyribonucleoside 5'-diphosphate + ATP = a 2'-deoxyribonucleoside 5'-triphosphate + ADP. The enzyme catalyses a ribonucleoside 5'-diphosphate + ATP = a ribonucleoside 5'-triphosphate + ADP. Major role in the synthesis of nucleoside triphosphates other than ATP. The ATP gamma phosphate is transferred to the NDP beta phosphate via a ping-pong mechanism, using a phosphorylated active-site intermediate. This is Nucleoside diphosphate kinase from Maricaulis maris (strain MCS10) (Caulobacter maris).